A 1109-amino-acid chain; its full sequence is Hybrid signal transduction histidine kinase F (1109 aa).

Positions Leu-237 to Glu-289 constitute a PAC domain. One can recognise a Histidine kinase domain in the interval Thr-324 to Gln-547. Phosphohistidine; by autocatalysis is present on His-327. Positions Ser-719–Val-760 form a coiled coil. Low complexity predominate over residues Leu-739–Gln-758. The interval Leu-739 to Glu-819 is disordered. Basic and acidic residues predominate over residues Asp-767–Tyr-782. In terms of domain architecture, Response regulatory spans Arg-928–Leu-1048. Residue Asp-977 is modified to 4-aspartylphosphate. The span at Asn-1052 to Asn-1099 shows a compositional bias: low complexity. Residues Asn-1052 to Ile-1109 are disordered. Residues Tyr-1100–Ile-1109 are compositionally biased toward polar residues.

It catalyses the reaction ATP + protein L-histidine = ADP + protein N-phospho-L-histidine.. Acts as a receptor histidine kinase for a signal transduction pathway. This protein undergoes an ATP-dependent autophosphorylation at a conserved histidine residue in the kinase core, and a phosphoryl group is then transferred to a conserved aspartate residue in the receiver domain. This is Hybrid signal transduction histidine kinase F (dhkF) from Dictyostelium discoideum (Social amoeba).